A 101-amino-acid chain; its full sequence is Large ribosomal subunit protein eL43 (101 aa).

Residues 40–62 form a C4-type zinc finger; that stretch reads CPSCRSLVRLKRLAFGIWQCPKC.

This sequence belongs to the eukaryotic ribosomal protein eL43 family. The cofactor is Zn(2+).

This is Large ribosomal subunit protein eL43 from Pyrobaculum islandicum (strain DSM 4184 / JCM 9189 / GEO3).